Consider the following 285-residue polypeptide: Phosphatidylserine decarboxylase proenzyme (285 aa).

Active-site charge relay system; for autoendoproteolytic cleavage activity residues include Asp89, His146, and Ser252. The active-site Schiff-base intermediate with substrate; via pyruvic acid; for decarboxylase activity is the Ser252. Ser252 carries the pyruvic acid (Ser); by autocatalysis modification.

The protein belongs to the phosphatidylserine decarboxylase family. PSD-B subfamily. Prokaryotic type I sub-subfamily. Heterodimer of a large membrane-associated beta subunit and a small pyruvoyl-containing alpha subunit. Requires pyruvate as cofactor. Post-translationally, is synthesized initially as an inactive proenzyme. Formation of the active enzyme involves a self-maturation process in which the active site pyruvoyl group is generated from an internal serine residue via an autocatalytic post-translational modification. Two non-identical subunits are generated from the proenzyme in this reaction, and the pyruvate is formed at the N-terminus of the alpha chain, which is derived from the carboxyl end of the proenzyme. The autoendoproteolytic cleavage occurs by a canonical serine protease mechanism, in which the side chain hydroxyl group of the serine supplies its oxygen atom to form the C-terminus of the beta chain, while the remainder of the serine residue undergoes an oxidative deamination to produce ammonia and the pyruvoyl prosthetic group on the alpha chain. During this reaction, the Ser that is part of the protease active site of the proenzyme becomes the pyruvoyl prosthetic group, which constitutes an essential element of the active site of the mature decarboxylase.

It is found in the cell membrane. It catalyses the reaction a 1,2-diacyl-sn-glycero-3-phospho-L-serine + H(+) = a 1,2-diacyl-sn-glycero-3-phosphoethanolamine + CO2. It participates in phospholipid metabolism; phosphatidylethanolamine biosynthesis; phosphatidylethanolamine from CDP-diacylglycerol: step 2/2. Catalyzes the formation of phosphatidylethanolamine (PtdEtn) from phosphatidylserine (PtdSer). This is Phosphatidylserine decarboxylase proenzyme from Vibrio vulnificus (strain CMCP6).